We begin with the raw amino-acid sequence, 1166 residues long: UDP-N-acetylglucosamine transferase subunit ALG13 (1166 aa).

Positions 1-125 are glycosyltransferase activity; it reads MKRAFVTVGT…LHKEGHLFYC (125 aa). The deubiquitinase activity stretch occupies residues 126–394; the sequence is TCRVLSCPAP…GSRRNKHHAL (269 aa). One can recognise an OTU domain in the interval 225–346; that stretch reads LFRKVVAKDA…NGHYDSVYSK (122 aa). Catalysis depends on Asp233, which acts as the For deubiquitinase activity. Residue Cys236 is the Nucleophile; for deubiquitinase activity of the active site. The For deubiquitinase activity role is filled by His339. Residues 393-438 are disordered; sequence ALTASVEGSSDQKSSTEDRTEEAAACSSAASTPEGNKQGTERQKVP. The Tudor domain maps to 486 to 546; that stretch reads YYFLGDKCQV…RPVNQVALLP (61 aa). Composition is skewed to pro residues over residues 921 to 930, 941 to 957, and 1004 to 1034; these read PPPLPPPPPA, PLPPPPPPPPPPPPPYS, and QPQPQPQPQPQPQPQPQPQPQQPQQQQPPPQ. 2 disordered regions span residues 921-966 and 998-1056; these read PPPL…SDLP and QQQL…EQPL.

Belongs to the glycosyltransferase 28 family. As to quaternary structure, forms with ALG14 the active heterodimeric UDP-N-acetylglucosamine transferase complex. Not able to interact with ALG14 to form an active UDP-N-acetylglucosamine transferase complex.

The protein resides in the endoplasmic reticulum membrane. The enzyme catalyses an N-acetyl-alpha-D-glucosaminyl-diphospho-di-trans,poly-cis-dolichol + UDP-N-acetyl-alpha-D-glucosamine = an N,N'-diacetylchitobiosyl-diphospho-di-trans,poly-cis-dolichol + UDP + H(+). It functions in the pathway protein modification; protein glycosylation. Functionally, catalytic subunit of the UDP-N-acetylglucosamine transferase complex that operates in the biosynthetic pathway of dolichol-linked oligosaccharides, the glycan precursors employed in protein asparagine (N)-glycosylation. The assembly of dolichol-linked oligosaccharides begins on the cytosolic side of the endoplasmic reticulum membrane and finishes in its lumen. The sequential addition of sugars to dolichol pyrophosphate produces dolichol-linked oligosaccharides containing fourteen sugars, including two GlcNAcs, nine mannoses and three glucoses. Once assembled, the oligosaccharide is transferred from the lipid to nascent proteins by oligosaccharyltransferases. On the cytoplasmic face of the endoplasmic reticulum, the dimeric ALG13/ALG14 complex catalyzes the second step of dolichol pyrophosphate biosynthesis, transferring a beta1,4-linked N-acetylglucosamine (GlcNAc) from UDP-GlcNAc to GlcNAc-pyrophosphatedolichol (Gn-PDol) to produce N,N'-diacetylchitobiosyl diphosphodolichol. N,N'-diacetylchitobiosyl diphosphodolichol is a substrate for ALG1, the following enzyme in the biosynthetic pathway. Its function is as follows. No glycosyltransferase or deubiquitinase activity is detected for this potential multifunctional enzyme. The sequence is that of UDP-N-acetylglucosamine transferase subunit ALG13 from Mus musculus (Mouse).